Reading from the N-terminus, the 146-residue chain is Ribonuclease H (146 aa).

Residues glutamate 4–valine 145 enclose the RNase H type-1 domain. Positions 13, 51, 73, and 137 each coordinate Mg(2+).

Belongs to the RNase H family. In terms of assembly, monomer. The cofactor is Mg(2+).

Its subcellular location is the cytoplasm. It carries out the reaction Endonucleolytic cleavage to 5'-phosphomonoester.. Endonuclease that specifically degrades the RNA of RNA-DNA hybrids. In Ehrlichia chaffeensis (strain ATCC CRL-10679 / Arkansas), this protein is Ribonuclease H.